A 159-amino-acid polypeptide reads, in one-letter code: 2-C-methyl-D-erythritol 2,4-cyclodiphosphate synthase (159 aa).

Residues Asp-10 and His-12 each coordinate a divalent metal cation. Residues 10 to 12 and 36 to 37 each bind 4-CDP-2-C-methyl-D-erythritol 2-phosphate; these read DVH and HS. A divalent metal cation is bound at residue His-44. Residues 58–60, 134–137, Phe-141, and Arg-144 contribute to the 4-CDP-2-C-methyl-D-erythritol 2-phosphate site; these read DIG and TTSE.

It belongs to the IspF family. As to quaternary structure, homotrimer. It depends on a divalent metal cation as a cofactor.

The catalysed reaction is 4-CDP-2-C-methyl-D-erythritol 2-phosphate = 2-C-methyl-D-erythritol 2,4-cyclic diphosphate + CMP. It functions in the pathway isoprenoid biosynthesis; isopentenyl diphosphate biosynthesis via DXP pathway; isopentenyl diphosphate from 1-deoxy-D-xylulose 5-phosphate: step 4/6. Involved in the biosynthesis of isopentenyl diphosphate (IPP) and dimethylallyl diphosphate (DMAPP), two major building blocks of isoprenoid compounds. Catalyzes the conversion of 4-diphosphocytidyl-2-C-methyl-D-erythritol 2-phosphate (CDP-ME2P) to 2-C-methyl-D-erythritol 2,4-cyclodiphosphate (ME-CPP) with a corresponding release of cytidine 5-monophosphate (CMP). The polypeptide is 2-C-methyl-D-erythritol 2,4-cyclodiphosphate synthase (Cereibacter sphaeroides (strain ATCC 17029 / ATH 2.4.9) (Rhodobacter sphaeroides)).